The following is a 91-amino-acid chain: Large ribosomal subunit protein bL27 (91 aa).

The tract at residues 1 to 22 (MAHKKAGGSSRNGRDSAGRRLG) is disordered.

Belongs to the bacterial ribosomal protein bL27 family.

The sequence is that of Large ribosomal subunit protein bL27 from Methylocella silvestris (strain DSM 15510 / CIP 108128 / LMG 27833 / NCIMB 13906 / BL2).